A 517-amino-acid chain; its full sequence is ATP synthase subunit alpha 1 (517 aa).

An ATP-binding site is contributed by 174 to 181; it reads GDRQTGKT.

This sequence belongs to the ATPase alpha/beta chains family. As to quaternary structure, F-type ATPases have 2 components, CF(1) - the catalytic core - and CF(0) - the membrane proton channel. CF(1) has five subunits: alpha(3), beta(3), gamma(1), delta(1), epsilon(1). CF(0) has three main subunits: a(1), b(2) and c(9-12). The alpha and beta chains form an alternating ring which encloses part of the gamma chain. CF(1) is attached to CF(0) by a central stalk formed by the gamma and epsilon chains, while a peripheral stalk is formed by the delta and b chains.

It is found in the cell inner membrane. It carries out the reaction ATP + H2O + 4 H(+)(in) = ADP + phosphate + 5 H(+)(out). Its function is as follows. Produces ATP from ADP in the presence of a proton gradient across the membrane. The alpha chain is a regulatory subunit. The chain is ATP synthase subunit alpha 1 from Albidiferax ferrireducens (strain ATCC BAA-621 / DSM 15236 / T118) (Rhodoferax ferrireducens).